Here is a 500-residue protein sequence, read N- to C-terminus: Bifunctional protein GlmU (500 aa).

Residues 1–242 (MPVQTAVVVL…SAKVAGANDR (242 aa)) are pyrophosphorylase. UDP-N-acetyl-alpha-D-glucosamine is bound by residues 10 to 13 (LAAG), Lys24, Gln81, and 86 to 87 (GT). Asp112 lines the Mg(2+) pocket. Residues Gly151, Glu167, Asn182, and Asn240 each coordinate UDP-N-acetyl-alpha-D-glucosamine. Residue Asn240 coordinates Mg(2+). The linker stretch occupies residues 243–263 (VQLSRLAAELNRRTVENWMRA). An N-acetyltransferase region spans residues 264 to 500 (GVTVVDPSTT…KQDLKDGIEQ (237 aa)). UDP-N-acetyl-alpha-D-glucosamine is bound by residues Arg345 and Lys363. His375 (proton acceptor) is an active-site residue. 2 residues coordinate UDP-N-acetyl-alpha-D-glucosamine: Tyr378 and Asn389. Acetyl-CoA contacts are provided by residues Ala392, 398 to 399 (NY), Ser417, and Ala435. The segment at 459–500 (DGWVQRNRPGTPAAEAASAAGPHHSSDLHETEKQDLKDGIEQ) is disordered. Residues 482 to 500 (HSSDLHETEKQDLKDGIEQ) show a composition bias toward basic and acidic residues.

In the N-terminal section; belongs to the N-acetylglucosamine-1-phosphate uridyltransferase family. This sequence in the C-terminal section; belongs to the transferase hexapeptide repeat family. In terms of assembly, homotrimer. The cofactor is Mg(2+).

It localises to the cytoplasm. It catalyses the reaction alpha-D-glucosamine 1-phosphate + acetyl-CoA = N-acetyl-alpha-D-glucosamine 1-phosphate + CoA + H(+). It carries out the reaction N-acetyl-alpha-D-glucosamine 1-phosphate + UTP + H(+) = UDP-N-acetyl-alpha-D-glucosamine + diphosphate. It functions in the pathway nucleotide-sugar biosynthesis; UDP-N-acetyl-alpha-D-glucosamine biosynthesis; N-acetyl-alpha-D-glucosamine 1-phosphate from alpha-D-glucosamine 6-phosphate (route II): step 2/2. The protein operates within nucleotide-sugar biosynthesis; UDP-N-acetyl-alpha-D-glucosamine biosynthesis; UDP-N-acetyl-alpha-D-glucosamine from N-acetyl-alpha-D-glucosamine 1-phosphate: step 1/1. It participates in bacterial outer membrane biogenesis; LPS lipid A biosynthesis. Its function is as follows. Catalyzes the last two sequential reactions in the de novo biosynthetic pathway for UDP-N-acetylglucosamine (UDP-GlcNAc). The C-terminal domain catalyzes the transfer of acetyl group from acetyl coenzyme A to glucosamine-1-phosphate (GlcN-1-P) to produce N-acetylglucosamine-1-phosphate (GlcNAc-1-P), which is converted into UDP-GlcNAc by the transfer of uridine 5-monophosphate (from uridine 5-triphosphate), a reaction catalyzed by the N-terminal domain. The protein is Bifunctional protein GlmU of Rhodococcus opacus (strain B4).